The following is a 133-amino-acid chain: Small ribosomal subunit protein uS11 (133 aa).

It belongs to the universal ribosomal protein uS11 family. Part of the 30S ribosomal subunit. Interacts with proteins S7 and S18. Binds to IF-3.

Located on the platform of the 30S subunit, it bridges several disparate RNA helices of the 16S rRNA. Forms part of the Shine-Dalgarno cleft in the 70S ribosome. This Bordetella avium (strain 197N) protein is Small ribosomal subunit protein uS11.